We begin with the raw amino-acid sequence, 425 residues long: Serine hydroxymethyltransferase (425 aa).

(6S)-5,6,7,8-tetrahydrofolate contacts are provided by residues Leu123 and 127–129; that span reads GHL. The residue at position 232 (Lys232) is an N6-(pyridoxal phosphate)lysine. A (6S)-5,6,7,8-tetrahydrofolate-binding site is contributed by Glu248.

This sequence belongs to the SHMT family. In terms of assembly, homodimer. It depends on pyridoxal 5'-phosphate as a cofactor.

Its subcellular location is the cytoplasm. The enzyme catalyses (6R)-5,10-methylene-5,6,7,8-tetrahydrofolate + glycine + H2O = (6S)-5,6,7,8-tetrahydrofolate + L-serine. It participates in one-carbon metabolism; tetrahydrofolate interconversion. The protein operates within amino-acid biosynthesis; glycine biosynthesis; glycine from L-serine: step 1/1. In terms of biological role, catalyzes the reversible interconversion of serine and glycine with tetrahydrofolate (THF) serving as the one-carbon carrier. This reaction serves as the major source of one-carbon groups required for the biosynthesis of purines, thymidylate, methionine, and other important biomolecules. Also exhibits THF-independent aldolase activity toward beta-hydroxyamino acids, producing glycine and aldehydes, via a retro-aldol mechanism. The chain is Serine hydroxymethyltransferase from Anaplasma phagocytophilum (strain HZ).